The following is a 1517-amino-acid chain: Dual oxidase 2 (1517 aa).

A signal peptide spans 1 to 25 (MLPTSLKTLVLLGALLTGPLGPAGG). Residues 26–599 (QDAPSLPREV…YFEGSGAGYG (574 aa)) lie on the Extracellular side of the membrane. The peroxidase-like; mediates peroxidase activity stretch occupies residues 30–596 (SLPREVQRYD…VIDYFEGSGA (567 aa)). N-linked (GlcNAc...) asparagine glycosylation is found at asparagine 100, asparagine 348, asparagine 455, and asparagine 537. Cysteine 124 and cysteine 1131 are disulfide-bonded. Residues 600 to 620 (VTLLAVCCFPVVSLIIAWVVA) form a helical membrane-spanning segment. The Cytoplasmic segment spans residues 621–1010 (RFRNRERKML…KRFVENYRRH (390 aa)). EF-hand domains follow at residues 819-854 (PQDMFVESMFSLADKDGNGYISFREFLDILVVFMKG), 855-890 (SPQDKSRLMFTMYDLDGNGFLSKEEFFTMMRSFIEI), and 899-934 (QLAEVVESMFRESGFQDKEELTWEDFHFMLRDHDSD). Positions 832, 834, 836, 838, 843, 868, 870, 872, and 879 each coordinate Ca(2+). Positions 960-1214 (RVSFLTRTPG…GSYALIQLPS (255 aa)) are interaction with TXNDC11. Residues 1011-1031 (IVCVTIFSAICAGLFADRAYY) traverse the membrane as a helical segment. Over 1032-1046 (YGFASPPTDIEETTY) the chain is Extracellular. The chain crosses the membrane as a helical span at residues 1047-1067 (VGIILSRGTAASISFMFSYIL). One can recognise a Ferric oxidoreductase domain in the interval 1053–1235 (RGTAASISFM…YVGDKLVSLS (183 aa)). At 1068–1100 (LTMCRNLITFLRETFLNRYIPFDAAVDFHRWIA) the chain is on the cytoplasmic side. The helical transmembrane segment at 1101-1121 (MAAVVLAVVHSLGHAVNVYIF) threads the bilayer. Residues 1122–1154 (SVSPLSLMTCVFPSVFVNDGSKLPPKYYWWFFE) are Extracellular-facing. The helical transmembrane segment at 1155-1175 (TVPGMTGVLLLLVLAIMYVFA) threads the bilayer. Residues 1176 to 1185 (SHHFRRHSFR) are Cytoplasmic-facing. A helical transmembrane segment spans residues 1186 to 1206 (GFWLTHHLYVVLYALIIIHGS). Residue tyrosine 1207 is a topological domain, extracellular. Residues 1208-1228 (ALIQLPSFHIYFLVPAIIYVG) traverse the membrane as a helical segment. Over 1229–1517 (DKLVSLSRKK…AHFVHHYENF (289 aa)) the chain is Cytoplasmic. In terms of domain architecture, FAD-binding FR-type spans 1236 to 1342 (RKKVEISVVK…DGPFGEGHQE (107 aa)).

This sequence in the N-terminal section; belongs to the peroxidase family. As to quaternary structure, heterodimer with DUOXA2; disulfide-linked. Interacts with TXNDC11, TPO and CYBA. Post-translationally, N-glycosylated. In terms of tissue distribution, expressed in colon, duodenum, rectum and thyroid.

It is found in the apical cell membrane. Its subcellular location is the cell junction. The catalysed reaction is NADH + O2 + H(+) = H2O2 + NAD(+). The enzyme catalyses NADPH + O2 + H(+) = H2O2 + NADP(+). The protein operates within hormone biosynthesis; thyroid hormone biosynthesis. Its activity is regulated as follows. The NADPH oxidase activity is calcium-dependent. Peroxidase activity is inhibited by aminobenzohydrazide. Its function is as follows. Generates hydrogen peroxide which is required for the activity of thyroid peroxidase/TPO and lactoperoxidase/LPO. Plays a role in thyroid hormones synthesis and lactoperoxidase-mediated antimicrobial defense at the surface of mucosa. May have its own peroxidase activity through its N-terminal peroxidase-like domain. This is Dual oxidase 2 (Duox2) from Rattus norvegicus (Rat).